The sequence spans 360 residues: NADP-dependent alcohol dehydrogenase 6 (360 aa).

Residue cysteine 46 participates in Zn(2+) binding. The NADP(+) site is built by glycine 47 and histidine 51. Zn(2+) contacts are provided by histidine 68, cysteine 100, cysteine 103, cysteine 106, and cysteine 114. Position 131 is a phosphoserine (serine 131). Zn(2+) is bound at residue cysteine 163. Residues leucine 188, glycine 190, isoleucine 191, serine 210, arginine 211, lysine 215, cysteine 250, serine 252, threonine 255, aspartate 256, isoleucine 275, isoleucine 277, tyrosine 298, serine 299, leucine 301, and arginine 348 each coordinate NADP(+). Serine 359 carries the post-translational modification Phosphoserine.

It belongs to the zinc-containing alcohol dehydrogenase family. Homodimer. It depends on Zn(2+) as a cofactor.

The protein resides in the cytoplasm. It localises to the nucleus. The enzyme catalyses a primary alcohol + NADP(+) = an aldehyde + NADPH + H(+). The catalysed reaction is (E)-cinnamyl alcohol + NADP(+) = (E)-cinnamaldehyde + NADPH + H(+). It catalyses the reaction hexan-1-ol + NADP(+) = hexanal + NADPH + H(+). It carries out the reaction 3-methylbutanol + NADP(+) = 3-methylbutanal + NADPH + H(+). The enzyme catalyses S-nitroso-CoA + NADPH + H(+) = sulfinamide-CoA + NADP(+). Functionally, NADP-dependent, medium-chain alcohol dehydrogenase with a broad substrate specificity. Aldehydes exhibited 50-12000 times higher catalytic efficiency than the corresponding alcohols, therefore the major function of the enzyme is as an aldehyde reductase. The enzyme is active towards aromatic and aliphatic (linear and branched-chain) aldehydes. The enzyme is very active towards aromatic aldehydes, such as cinnamaldehyde, benzaldehyde and substituted benzaldehydes, such as veratraldehyde and panisaldehyde. It exhibits low activity towards substituted cinnamaldehydes, such as coniferaldehyde and sinapaldehyde. The enzyme has no activity with ketones, such as acetone or cyclohexanone. For the reverse reaction, linear and branched-chain primary alcohols are substrates, whereas very low activity is found with secondary alcohols, such as butan-2-ol. The enzyme may be physiologically involved in several steps of the lignin degradation pathway, initiated by other microorganisms, in the synthesis of fusel alcohols, products derived from the aminoacidic metabolism, and in the homeostasis of NADP(H). Has the ability to reduce 5-hydroxymethyl furfural (HMF), a furan derivative which is formed during the hydrolysis of lignocellulosic materials, to 5-hydroxymethylfurfuryl alcohol, thereby alleviating the inhibition of the fermentation of lignocellulose hydrolysates by HMF during fuel ethanol production. Also acts as an inhibitor of protein S-nitrosylation by mediating degradation of S-nitroso-coenzyme A (S-nitroso-CoA), a cofactor required to S-nitrosylate proteins. This Saccharomyces cerevisiae (strain ATCC 204508 / S288c) (Baker's yeast) protein is NADP-dependent alcohol dehydrogenase 6.